Consider the following 186-residue polypeptide: Large ribosomal subunit protein uL22 (186 aa).

2 stretches are compositionally biased toward basic and acidic residues: residues 157 to 167 (VSKATDDEPTK) and 177 to 186 (RQKEKMLRSE). Positions 157–186 (VSKATDDEPTKKKLSKKKLQRQKEKMLRSE) are disordered.

This sequence belongs to the universal ribosomal protein uL22 family.

This chain is Large ribosomal subunit protein uL22 (RpL17), found in Drosophila yakuba (Fruit fly).